The following is a 197-amino-acid chain: Recombination protein RecR (197 aa).

A C4-type zinc finger spans residues 56–71 (CERCNTFTETEICQRC). The Toprim domain occupies 79–174 (SLLCVVEMPA…RVSRLSRGVP (96 aa)).

This sequence belongs to the RecR family.

May play a role in DNA repair. It seems to be involved in an RecBC-independent recombinational process of DNA repair. It may act with RecF and RecO. This chain is Recombination protein RecR, found in Aromatoleum aromaticum (strain DSM 19018 / LMG 30748 / EbN1) (Azoarcus sp. (strain EbN1)).